The chain runs to 254 residues: Triosephosphate isomerase (254 aa).

A substrate-binding site is contributed by 9-11 (NWK). The active-site Electrophile is His-96. The Proton acceptor role is filled by Glu-169. Substrate contacts are provided by residues Gly-175, Ser-215, and 236–237 (GG).

Belongs to the triosephosphate isomerase family. In terms of assembly, homodimer.

The protein localises to the cytoplasm. It carries out the reaction D-glyceraldehyde 3-phosphate = dihydroxyacetone phosphate. The protein operates within carbohydrate biosynthesis; gluconeogenesis. It participates in carbohydrate degradation; glycolysis; D-glyceraldehyde 3-phosphate from glycerone phosphate: step 1/1. Functionally, involved in the gluconeogenesis. Catalyzes stereospecifically the conversion of dihydroxyacetone phosphate (DHAP) to D-glyceraldehyde-3-phosphate (G3P). This is Triosephosphate isomerase from Borrelia hermsii (strain HS1 / DAH).